Here is a 440-residue protein sequence, read N- to C-terminus: Thymidine phosphorylase (440 aa).

This sequence belongs to the thymidine/pyrimidine-nucleoside phosphorylase family. Homodimer.

It catalyses the reaction thymidine + phosphate = 2-deoxy-alpha-D-ribose 1-phosphate + thymine. It participates in pyrimidine metabolism; dTMP biosynthesis via salvage pathway; dTMP from thymine: step 1/2. The enzymes which catalyze the reversible phosphorolysis of pyrimidine nucleosides are involved in the degradation of these compounds and in their utilization as carbon and energy sources, or in the rescue of pyrimidine bases for nucleotide synthesis. The chain is Thymidine phosphorylase from Salmonella agona (strain SL483).